Consider the following 286-residue polypeptide: Formyltetrahydrofolate deformylase (286 aa).

An ACT domain is found at Val8–Gln88. Asp230 is a catalytic residue.

Belongs to the PurU family.

It carries out the reaction (6R)-10-formyltetrahydrofolate + H2O = (6S)-5,6,7,8-tetrahydrofolate + formate + H(+). It functions in the pathway purine metabolism; IMP biosynthesis via de novo pathway; formate from 10-formyl-5,6,7,8-tetrahydrofolate: step 1/1. Catalyzes the hydrolysis of 10-formyltetrahydrofolate (formyl-FH4) to formate and tetrahydrofolate (FH4). This is Formyltetrahydrofolate deformylase from Corynebacterium sp. (strain P-1).